Reading from the N-terminus, the 288-residue chain is Diaminopimelate epimerase (288 aa).

Positions 14 and 67 each coordinate substrate. The active-site Proton donor is Cys76. Substrate is bound by residues 77–78 (GN), Asn166, Asn199, and 217–218 (ER). Catalysis depends on Cys226, which acts as the Proton acceptor. Residue 227–228 (GT) participates in substrate binding.

The protein belongs to the diaminopimelate epimerase family. In terms of assembly, homodimer.

It localises to the cytoplasm. The enzyme catalyses (2S,6S)-2,6-diaminopimelate = meso-2,6-diaminopimelate. Its pathway is amino-acid biosynthesis; L-lysine biosynthesis via DAP pathway; DL-2,6-diaminopimelate from LL-2,6-diaminopimelate: step 1/1. In terms of biological role, catalyzes the stereoinversion of LL-2,6-diaminopimelate (L,L-DAP) to meso-diaminopimelate (meso-DAP), a precursor of L-lysine and an essential component of the bacterial peptidoglycan. In Bacillus cereus (strain ATCC 14579 / DSM 31 / CCUG 7414 / JCM 2152 / NBRC 15305 / NCIMB 9373 / NCTC 2599 / NRRL B-3711), this protein is Diaminopimelate epimerase.